Reading from the N-terminus, the 353-residue chain is Photosystem II protein D1 (353 aa).

Residue T2 is modified to N-acetylthreonine. Position 2 is a phosphothreonine (T2). 3 consecutive transmembrane segments (helical) span residues 29–46 (YIGW…TATS), 118–133 (HFLL…EWEL), and 142–156 (WIAV…AATA). H118 serves as a coordination point for chlorophyll a. Residue Y126 coordinates pheophytin a. Residues D170 and E189 each coordinate [CaMn4O5] cluster. A helical membrane pass occupies residues 197-218 (FHMLGVAGVFGGSLFSAMHGSL). A chlorophyll a-binding site is contributed by H198. A quinone-binding positions include H215 and 264 to 265 (SF). Position 215 (H215) interacts with Fe cation. H272 contributes to the Fe cation binding site. A helical transmembrane segment spans residues 274–288 (FLAAWPVVGIWFTAL). Residues H332, E333, D342, and A344 each coordinate [CaMn4O5] cluster. The propeptide occupies 345 to 353 (AVEVPSING).

This sequence belongs to the reaction center PufL/M/PsbA/D family. PSII is composed of 1 copy each of membrane proteins PsbA, PsbB, PsbC, PsbD, PsbE, PsbF, PsbH, PsbI, PsbJ, PsbK, PsbL, PsbM, PsbT, PsbX, PsbY, PsbZ, Psb30/Ycf12, at least 3 peripheral proteins of the oxygen-evolving complex and a large number of cofactors. It forms dimeric complexes. Requires The D1/D2 heterodimer binds P680, chlorophylls that are the primary electron donor of PSII, and subsequent electron acceptors. It shares a non-heme iron and each subunit binds pheophytin, quinone, additional chlorophylls, carotenoids and lipids. D1 provides most of the ligands for the Mn4-Ca-O5 cluster of the oxygen-evolving complex (OEC). There is also a Cl(-1) ion associated with D1 and D2, which is required for oxygen evolution. The PSII complex binds additional chlorophylls, carotenoids and specific lipids. as cofactor. Post-translationally, tyr-161 forms a radical intermediate that is referred to as redox-active TyrZ, YZ or Y-Z. In terms of processing, C-terminally processed by CTPA; processing is essential to allow assembly of the oxygen-evolving complex and thus photosynthetic growth.

It localises to the plastid. The protein resides in the chloroplast thylakoid membrane. The enzyme catalyses 2 a plastoquinone + 4 hnu + 2 H2O = 2 a plastoquinol + O2. In terms of biological role, photosystem II (PSII) is a light-driven water:plastoquinone oxidoreductase that uses light energy to abstract electrons from H(2)O, generating O(2) and a proton gradient subsequently used for ATP formation. It consists of a core antenna complex that captures photons, and an electron transfer chain that converts photonic excitation into a charge separation. The D1/D2 (PsbA/PsbD) reaction center heterodimer binds P680, the primary electron donor of PSII as well as several subsequent electron acceptors. This chain is Photosystem II protein D1, found in Cucumis sativus (Cucumber).